Consider the following 536-residue polypeptide: CTP synthase (536 aa).

An amidoligase domain region spans residues 1-267 (MSKFVFVTGG…CKETLKYLEL (267 aa)). Position 13 (Ser13) interacts with CTP. A UTP-binding site is contributed by Ser13. Residues 14 to 19 (SIGKGI) and Asp71 contribute to the ATP site. Mg(2+) contacts are provided by Asp71 and Glu141. CTP is bound by residues 148–150 (DIE), 188–193 (KTKPTQ), and Lys224. UTP-binding positions include 188–193 (KTKPTQ) and Lys224. The region spanning 292-534 (KVALVGKYIE…IKSSQENLTQ (243 aa)) is the Glutamine amidotransferase type-1 domain. Gly354 provides a ligand contact to L-glutamine. Cys381 serves as the catalytic Nucleophile; for glutamine hydrolysis. L-glutamine-binding positions include 382–385 (LGMQ), Glu405, and Arg462. Residues His507 and Glu509 contribute to the active site.

The protein belongs to the CTP synthase family. Homotetramer.

It carries out the reaction UTP + L-glutamine + ATP + H2O = CTP + L-glutamate + ADP + phosphate + 2 H(+). It catalyses the reaction L-glutamine + H2O = L-glutamate + NH4(+). The enzyme catalyses UTP + NH4(+) + ATP = CTP + ADP + phosphate + 2 H(+). Its pathway is pyrimidine metabolism; CTP biosynthesis via de novo pathway; CTP from UDP: step 2/2. With respect to regulation, allosterically activated by GTP, when glutamine is the substrate; GTP has no effect on the reaction when ammonia is the substrate. The allosteric effector GTP functions by stabilizing the protein conformation that binds the tetrahedral intermediate(s) formed during glutamine hydrolysis. Inhibited by the product CTP, via allosteric rather than competitive inhibition. Functionally, catalyzes the ATP-dependent amination of UTP to CTP with either L-glutamine or ammonia as the source of nitrogen. Regulates intracellular CTP levels through interactions with the four ribonucleotide triphosphates. The protein is CTP synthase of Prochlorococcus marinus (strain MIT 9312).